The chain runs to 233 residues: UPF0758 protein Rcas_0037 (233 aa).

In terms of domain architecture, MPN spans 107 to 229 (QIRSPTDAAQ…FVSMRERGLA (123 aa)). Residues H178, H180, and D191 each contribute to the Zn(2+) site. A JAMM motif motif is present at residues 178 to 191 (HNHPSGDPTPSPED).

This sequence belongs to the UPF0758 family.

The sequence is that of UPF0758 protein Rcas_0037 from Roseiflexus castenholzii (strain DSM 13941 / HLO8).